A 641-amino-acid polypeptide reads, in one-letter code: Sodium-dependent nutrient amino acid transporter 1 (641 aa).

The disordered stretch occupies residues 1 to 38 (MELKGVQPSNGSSNGSGNGATNAASTEKTDAEKPTAER). Residues 1 to 40 (MELKGVQPSNGSSNGSGNGATNAASTEKTDAEKPTAERTN) are Cytoplasmic-facing. The span at 9–26 (SNGSSNGSGNGATNAAST) shows a compositional bias: low complexity. A compositionally biased stretch (basic and acidic residues) spans 27–36 (EKTDAEKPTA). 3 consecutive transmembrane segments (helical) span residues 41 to 61 (WGNG…LGNV), 74 to 94 (GAFL…MYYL), and 111 to 131 (SVVP…ICII). 2 N-linked (GlcNAc...) asparagine glycosylation sites follow: Asn185 and Asn190. 9 consecutive transmembrane segments (helical) span residues 229 to 249 (PDWK…LVIM), 258 to 278 (AAYF…IRAV), 307 to 327 (AVVQ…MFAS), 341 to 361 (IVTT…FAIL), 401 to 421 (LFSV…IVAL), 447 to 467 (VCGF…ILTL), 474 to 494 (TYVV…VYGL), 516 to 536 (CWSF…MVTI), and 552 to 572 (IAGW…GLWY).

This sequence belongs to the sodium:neurotransmitter symporter (SNF) (TC 2.A.22) family. As to expression, in larvae, weak specific expression in the anterior midgut just proximal to the gastric caeca reproductive rudiments, common ureters of the Malpighian tubules, and distal swollen portion of the anterior pair of Malpighian tubules. Expression is also seen in the imaginal disks of the head; brain hemispheres and the ventral ganglion. Stronger expression in the posterior midgut.

The protein resides in the membrane. In terms of biological role, unusual broad substrate spectrum amino acid:sodium cotransporter that promotes absorption of the D isomers of essential amino acids. Neutral amino acids are the preferred substrates, especially methionine and phenylalanine. The sequence is that of Sodium-dependent nutrient amino acid transporter 1 (NAAT1) from Drosophila melanogaster (Fruit fly).